The chain runs to 600 residues: tRNA(Ile)-lysidine synthase, chloroplastic (600 aa).

35–40 (SGGQDS) lines the ATP pocket.

This sequence belongs to the tRNA(Ile)-lysidine synthase family.

The protein localises to the plastid. Its subcellular location is the chloroplast. The catalysed reaction is cytidine(34) in tRNA(Ile2) + L-lysine + ATP = lysidine(34) in tRNA(Ile2) + AMP + diphosphate + H(+). Its function is as follows. Ligates lysine onto the cytidine present at position 34 of the AUA codon-specific tRNA(Ile) that contains the anticodon CAU, in an ATP-dependent manner. Cytidine is converted to lysidine, thus changing the amino acid specificity of the tRNA from methionine to isoleucine. This is tRNA(Ile)-lysidine synthase, chloroplastic from Tupiella akineta (Green alga).